Here is a 415-residue protein sequence, read N- to C-terminus: MAWPKVQPEVNIGVVGHVDHGKTTLVQAITGIWTSKHSEELKRGMTIKLGYAETNIGVCESCKKPEAYVTEPSCKSCGSDDEPKFLRRISFIDAPGHEVLMATMLSGAALMDGAILVVAANEPFPQPQTREHFVALGIIGVKNLIIVQNKVDVVSKEEALSQYRQIKQFTKGTWAENVPIIPVSALHKINIDSLIEGIEEYIKTPYRDLSQKPVMLVIRSFDVNKPGTQFNELKGGVIGGSIIQGLFKVDQEIKVLPGLRVEKQGKVSYEPIFTKISSIRFGDEEFKEAKPGGLVAIGTYLDPSLTKADNLLGSIITLADAEVPVLWNIRIKYNLLERVVGAKEMLKVDPIRAKETLMLSVGSSTTLGIVTSVKKDEIEVELRRPVAVWSNNIRTVISRQIAGRWRMIGWGLVEI.

Positions Q7–Y206 constitute a tr-type G domain. The segment at G16–T23 is G1. Mg(2+)-binding residues include D19, T23, G44, and T46. D19 to T24 contributes to the GTP binding site. Positions G44–K48 are G2. The Zn(2+) site is built by C59, C62, C74, and C77. Positions D93–G96 are G3. GTP contacts are provided by residues N149–D152 and S184–L186. A G4 region spans residues N149–D152. A G5 region spans residues S184 to L186.

It belongs to the TRAFAC class translation factor GTPase superfamily. Classic translation factor GTPase family. EIF2G subfamily. Heterotrimer composed of an alpha, a beta and a gamma chain. Requires Mg(2+) as cofactor.

It catalyses the reaction GTP + H2O = GDP + phosphate + H(+). Its function is as follows. eIF-2 functions in the early steps of protein synthesis by forming a ternary complex with GTP and initiator tRNA. This Saccharolobus solfataricus (strain ATCC 35092 / DSM 1617 / JCM 11322 / P2) (Sulfolobus solfataricus) protein is Translation initiation factor 2 subunit gamma.